The following is a 67-amino-acid chain: Cold shock protein ScoF (67 aa).

In terms of domain architecture, CSD spans 4 to 64; it reads GTVKWFNSEK…GQKGPQAENI (61 aa).

It is found in the cytoplasm. In Streptomyces coelicolor (strain ATCC BAA-471 / A3(2) / M145), this protein is Cold shock protein ScoF (scoF).